Reading from the N-terminus, the 188-residue chain is ATP synthase subunit b (188 aa).

A helical membrane pass occupies residues 19–39 (LPAVYDIVWSAVVFVVLLVVI).

Belongs to the ATPase B chain family. F-type ATPases have 2 components, F(1) - the catalytic core - and F(0) - the membrane proton channel. F(1) has five subunits: alpha(3), beta(3), gamma(1), delta(1), epsilon(1). F(0) has three main subunits: a(1), b(2) and c(10-14). The alpha and beta chains form an alternating ring which encloses part of the gamma chain. F(1) is attached to F(0) by a central stalk formed by the gamma and epsilon chains, while a peripheral stalk is formed by the delta and b chains.

It is found in the cell membrane. Its function is as follows. F(1)F(0) ATP synthase produces ATP from ADP in the presence of a proton or sodium gradient. F-type ATPases consist of two structural domains, F(1) containing the extramembraneous catalytic core and F(0) containing the membrane proton channel, linked together by a central stalk and a peripheral stalk. During catalysis, ATP synthesis in the catalytic domain of F(1) is coupled via a rotary mechanism of the central stalk subunits to proton translocation. Functionally, component of the F(0) channel, it forms part of the peripheral stalk, linking F(1) to F(0). The chain is ATP synthase subunit b from Clavibacter michiganensis subsp. michiganensis (strain NCPPB 382).